The primary structure comprises 260 residues: GDNF family receptor alpha-4 (260 aa).

The N-terminal stretch at 1 to 23 (MAHCMESALLLLLLLGSASFTDG) is a signal peptide. N-linked (GlcNAc...) asparagine glycosylation is present at N184. T237 is lipidated: GPI-anchor amidated threonine. Positions 238-260 (AGCCFPRVSWLYALTALALQALL) are cleaved as a propeptide — removed in mature form.

This sequence belongs to the GDNFR family. As to quaternary structure, interacts with ARTN ligand and RET: forms a 2:2:2 ternary complex composed of ARTN ligand, GFRA3 and RET receptor. Interacts with SORL1. As to expression, expressed in many tissues including adrenal medulla, brain neurons, with highest levels in the cerebral cortex and hippocampus. Moderate levels found in the gut circular muscle and myenteric ganglia as well as in other peripheral ganglia, including the sensory dorsal root and trigeminal as well as superior cervical and sympathetic chain ganglia. Isoform a1, isoform a2, isoform b1 and isoform b2 are exclusively found in the thyroid, parthyroid and pituitary glands.

The protein resides in the cell membrane. Its subcellular location is the secreted. Its function is as follows. Receptor for persephin (PSPN), a growth factor that exhibits neurotrophic activity on mesencephalic dopaminergic and motor neurons. Acts by binding to its coreceptor, GFRA4, leading to autophosphorylation and activation of the RET receptor. May be important in C-cell development and, in the postnatal development of the adrenal medulla. The sequence is that of GDNF family receptor alpha-4 (Gfra4) from Mus musculus (Mouse).